The chain runs to 475 residues: Pentatricopeptide repeat-containing protein At1g29710, mitochondrial (475 aa).

The N-terminal 37 residues, 1–37, are a transit peptide targeting the mitochondrion; it reads MVRLWCGKLRLWKPYLALATQSRNSWFCSGGGAPSHH. PPR repeat units follow at residues 83-117, 118-148, 153-183, 184-218, 219-254, and 255-285; these read AQNV…GYAM, DLIR…IIAL, DVGA…MPEW, NSGT…GNKP, NGEI…GIVP, and SMEH…MPME. The tract at residues 350 to 380 is type E(+) motif; that stretch reads YFYSTFRPVDSSHPQMNIIYETLMSLRSQLK. Positions 381–475 are type DYW motif; the sequence is EMGYVPDTRY…NGVCRCNNLW (95 aa).

The protein belongs to the PPR family. PCMP-H subfamily.

It localises to the mitochondrion. This Arabidopsis thaliana (Mouse-ear cress) protein is Pentatricopeptide repeat-containing protein At1g29710, mitochondrial (PCMP-H67).